We begin with the raw amino-acid sequence, 88 residues long: Small ribosomal subunit protein uS17 (88 aa).

This sequence belongs to the universal ribosomal protein uS17 family. In terms of assembly, part of the 30S ribosomal subunit.

In terms of biological role, one of the primary rRNA binding proteins, it binds specifically to the 5'-end of 16S ribosomal RNA. In Lactobacillus acidophilus (strain ATCC 700396 / NCK56 / N2 / NCFM), this protein is Small ribosomal subunit protein uS17.